The following is a 55-amino-acid chain: Large ribosomal subunit protein bL32 (55 aa).

The interval 1 to 28 is disordered; that stretch reads MAVQQNKPTRSKRGMRRSHDALTTATLS.

Belongs to the bacterial ribosomal protein bL32 family.

In Serratia proteamaculans (strain 568), this protein is Large ribosomal subunit protein bL32.